The sequence spans 25 residues: LKCYSSRTETMTCPEGKDKCEKYAV.

An intrachain disulfide couples Cys-3 to Cys-20.

Belongs to the three-finger toxin family. Short-chain subfamily. As to expression, expressed by the venom gland.

Its subcellular location is the secreted. Its function is as follows. Binds and may inhibit nicotinic acetylcholine receptors (nAChR). In Micrurus nigrocinctus (Central American coral snake), this protein is Nicotinic acetylcholine receptor-binding protein Mnn-4.